Consider the following 305-residue polypeptide: Ribosomal RNA large subunit methyltransferase F (305 aa).

This sequence belongs to the methyltransferase superfamily. METTL16/RlmF family.

It is found in the cytoplasm. It catalyses the reaction adenosine(1618) in 23S rRNA + S-adenosyl-L-methionine = N(6)-methyladenosine(1618) in 23S rRNA + S-adenosyl-L-homocysteine + H(+). In terms of biological role, specifically methylates the adenine in position 1618 of 23S rRNA. The protein is Ribosomal RNA large subunit methyltransferase F of Bacteroides fragilis (strain YCH46).